A 537-amino-acid polypeptide reads, in one-letter code: Polyadenylate-binding protein 6 (537 aa).

RRM domains follow at residues 21–99 (GSLY…WSQR), 112–188 (ANLY…KFIN), 202–279 (TNVY…KALK), and 304–381 (SNLY…VAER). The tract at residues 503–537 (KATTSEENRKEERRLTLSGKLSPEVKVEESGKQLQ) is disordered. Composition is skewed to basic and acidic residues over residues 506–517 (TSEENRKEERRL) and 525–537 (PEVK…KQLQ).

Belongs to the polyadenylate-binding protein type-1 family. Expressed at low levels in leaves and young seedlings.

The protein localises to the cytoplasm. The protein resides in the nucleus. In terms of biological role, binds the poly(A) tail of mRNA. Appears to be an important mediator of the multiple roles of the poly(A) tail in mRNA biogenesis, stability and translation. The protein is Polyadenylate-binding protein 6 (PAB6) of Arabidopsis thaliana (Mouse-ear cress).